The following is a 569-amino-acid chain: Protein ste7 (569 aa).

Disordered regions lie at residues 195–219 (APIT…VNSV) and 255–274 (FSVS…SPPI). A compositionally biased stretch (low complexity) spans 198–219 (TTSSATHTSQFSTSSSSSVNSV). A compositionally biased stretch (pro residues) spans 264–274 (PQTPISMSPPI).

It belongs to the arrestin family.

Its function is as follows. Has a role in promoting meiosis whereby it is involved in establishing the mating pheromone signaling pathway. It also has a role in suppressing meiosis until the conjugation process is complete. This is Protein ste7 (ste7) from Schizosaccharomyces pombe (strain 972 / ATCC 24843) (Fission yeast).